Consider the following 360-residue polypeptide: Inward rectifier potassium channel 13 (360 aa).

The Cytoplasmic portion of the chain corresponds to 1–50 (MESSNCKVITPLLSQRHRRMVTKDGHSTLQTDGAPRGLVYLRDAWGTLID). Residues 51 to 77 (MRWRWVMLVFSASFVLHWLVFAVLWYV) traverse the membrane as a helical segment. Over 78–105 (LAEMNGDLELDHDAPPENHTICVKYITS) the chain is Extracellular. The helical; Pore-forming intramembrane region spans 106 to 122 (FTAAFSFSLETQLTIGY). The Selectivity filter motif lies at 119-124 (TIGYGT). Residues 123-131 (GTMFPSGDC) are Extracellular-facing. A helical membrane pass occupies residues 132 to 157 (PSAIALLAIQMLLGLMLEAFITGAFV). The Cytoplasmic segment spans residues 158-360 (AKIARPKNRA…FQISETGLTE (203 aa)). Phosphoserine; by PKC is present on serine 201. Serine 287 is modified (phosphoserine; by PKA).

This sequence belongs to the inward rectifier-type potassium channel (TC 1.A.2.1) family. KCNJ13 subfamily. Homotetramer. Post-translationally, phosphorylation at Ser-201 by PKC strongly inhibits ionic currents, while phosphorylation at Ser-287 by PKA increases them.

It is found in the membrane. The protein resides in the cell membrane. The enzyme catalyses K(+)(in) = K(+)(out). With respect to regulation, inhibited by Ba(2+) and Cs(+), although sensitivity to those inhibitors is much lower than in other Kir channels. In terms of biological role, inward rectifier potassium channels are characterized by a greater tendency to allow potassium to flow into the cell rather than out of it. Their voltage dependence is regulated by the concentration of extracellular potassium; as external potassium is raised, the voltage range of the channel opening shifts to more positive voltages. The inward rectification is mainly due to the blockage of outward current by internal magnesium. KCNJ13 has a very low single channel conductance, low sensitivity to block by external barium and cesium, and no dependence of its inward rectification properties on the internal blocking particle magnesium. This Cavia porcellus (Guinea pig) protein is Inward rectifier potassium channel 13 (KCNJ13).